The chain runs to 243 residues: MCPADQTVATNNNDHLVQSEDPEHPANLIPELCRKFYNWGWVTGTGGGTSIRQGDHIFIAPSGVQKELMQPHNIFVLQWPTPKYPASERNYIRKPLKLNPSACTPLFLTAFEQGAGCCIHTHSQWAVLVTLLVEREKGPDACFEISNIEQIKGIPRGKGKGMLGFFDTLKIPIIENTAFEEDLTSGLEAAMNKYPDAYAVLVRRHGIYVWGDNTAKAKTQCESLDYIFQLAVEMHKLGLPWVK.

The disordered stretch occupies residues 1 to 22 (MCPADQTVATNNNDHLVQSEDP). Polar residues predominate over residues 7-16 (TVATNNNDHL). Substrate is bound at residue cysteine 103. Zn(2+)-binding residues include histidine 120 and histidine 122. Catalysis depends on glutamate 149, which acts as the Proton donor/acceptor. Histidine 205 contributes to the Zn(2+) binding site.

The protein belongs to the aldolase class II family. MtnB subfamily. It depends on Zn(2+) as a cofactor.

The protein localises to the cytoplasm. It carries out the reaction 5-(methylsulfanyl)-D-ribulose 1-phosphate = 5-methylsulfanyl-2,3-dioxopentyl phosphate + H2O. It functions in the pathway amino-acid biosynthesis; L-methionine biosynthesis via salvage pathway; L-methionine from S-methyl-5-thio-alpha-D-ribose 1-phosphate: step 2/6. Functionally, catalyzes the dehydration of methylthioribulose-1-phosphate (MTRu-1-P) into 2,3-diketo-5-methylthiopentyl-1-phosphate (DK-MTP-1-P). The polypeptide is Methylthioribulose-1-phosphate dehydratase (Penicillium rubens (strain ATCC 28089 / DSM 1075 / NRRL 1951 / Wisconsin 54-1255) (Penicillium chrysogenum)).